The primary structure comprises 224 residues: Flagellar L-ring protein (224 aa).

A signal peptide spans 1–15 (MARYLVLAVALLLAA). Cys16 carries the N-palmitoyl cysteine lipid modification. Residue Cys16 is the site of S-diacylglycerol cysteine attachment.

Belongs to the FlgH family. The basal body constitutes a major portion of the flagellar organelle and consists of four rings (L,P,S, and M) mounted on a central rod.

It is found in the cell outer membrane. It localises to the bacterial flagellum basal body. Its function is as follows. Assembles around the rod to form the L-ring and probably protects the motor/basal body from shearing forces during rotation. The protein is Flagellar L-ring protein of Shewanella baltica (strain OS223).